The following is a 279-amino-acid chain: Four and a half LIM domains protein 2 (279 aa).

A C4-type zinc finger spans residues 7-31 (CHHCNESLYGKKYILKEENPHCVAC). LIM zinc-binding domains follow at residues 40–92 (CEEC…CTDC), 101–153 (CQEC…CVPC), and 162–212 (CVQC…CLTC). Residue K78 forms a Glycyl lysine isopeptide (Lys-Gly) (interchain with G-Cter in SUMO2) linkage. Residues K167 and K220 each participate in a glycyl lysine isopeptide (Lys-Gly) (interchain with G-Cter in SUMO2) cross-link. The region spanning 221–275 (CAGCTNPISGLGGTKYISFEERQWHNDCFNCKKCSLSLVGRGFLTERDDILCPDC) is the LIM zinc-binding 4 domain. The residue at position 238 (S238) is a Phosphoserine.

As to quaternary structure, interacts with ZNF638 and TTN/titin. Interacts with E4F1. Interacts with GRB7. Interacts with SIRT1 and FOXO1. Interacts with CEFIP and calcineurin. Interacts with FOXK1. Expressed in heart only (at protein level).

The protein localises to the cytoplasm. The protein resides in the nucleus. It localises to the myofibril. It is found in the sarcomere. Its subcellular location is the z line. May function as a molecular transmitter linking various signaling pathways to transcriptional regulation. Negatively regulates the transcriptional repressor E4F1 and may function in cell growth. Inhibits the transcriptional activity of FOXO1 and its apoptotic function by enhancing the interaction of FOXO1 with SIRT1 and FOXO1 deacetylation. Negatively regulates the calcineurin/NFAT signaling pathway in cardiomyocytes. The sequence is that of Four and a half LIM domains protein 2 (Fhl2) from Rattus norvegicus (Rat).